The following is a 610-amino-acid chain: UvrABC system protein C (610 aa).

The GIY-YIG domain occupies His-13 to Val-91. The UVR domain occupies Gly-201–Val-236.

The protein belongs to the UvrC family. Interacts with UvrB in an incision complex.

Its subcellular location is the cytoplasm. Its function is as follows. The UvrABC repair system catalyzes the recognition and processing of DNA lesions. UvrC both incises the 5' and 3' sides of the lesion. The N-terminal half is responsible for the 3' incision and the C-terminal half is responsible for the 5' incision. This is UvrABC system protein C from Actinobacillus pleuropneumoniae serotype 7 (strain AP76).